A 935-amino-acid chain; its full sequence is Protein translocase subunit SecA (935 aa).

Residues glutamine 90, 108-112 (GEGKT), and aspartate 504 each bind ATP. The disordered stretch occupies residues 543 to 568 (GGRRPQGFGTSKKKGKNWSPSDADIF).

The protein belongs to the SecA family. In terms of assembly, monomer and homodimer. Part of the essential Sec protein translocation apparatus which comprises SecA, SecYEG and auxiliary proteins SecDF. Other proteins may also be involved.

It is found in the cell inner membrane. The protein localises to the cellular thylakoid membrane. The protein resides in the cytoplasm. The enzyme catalyses ATP + H2O + cellular proteinSide 1 = ADP + phosphate + cellular proteinSide 2.. Functionally, part of the Sec protein translocase complex. Interacts with the SecYEG preprotein conducting channel. Has a central role in coupling the hydrolysis of ATP to the transfer of proteins into and across the cell membrane, serving as an ATP-driven molecular motor driving the stepwise translocation of polypeptide chains across the membrane. Its function is as follows. Probably participates in protein translocation into and across both the cytoplasmic and thylakoid membranes in cyanobacterial cells. This is Protein translocase subunit SecA from Rippkaea orientalis (strain PCC 8801 / RF-1) (Cyanothece sp. (strain PCC 8801)).